The primary structure comprises 80 residues: CLAVATA3/ESR (CLE)-related protein 4 (80 aa).

Positions 1 to 22 (MASFKLWVCLILLLLEFSVHQC) are cleaved as a signal peptide. Residues 55–80 (SKDGQTVLGTLDSKRLSPGGPDPRHH) form a disordered region. Hydroxyproline is present on residues Pro-72 and Pro-75. O-linked (Ara...) hydroxyproline glycosylation is present at Pro-75.

The protein belongs to the CLV3/ESR signal peptide family. The O-glycosylation (arabinosylation) of the hydroxyproline Pro-75 enhances binding affinity of the CLE4p peptide for its receptor. In terms of tissue distribution, expressed in roots and seedlings.

It localises to the secreted. The protein resides in the extracellular space. In terms of biological role, extracellular signal peptide that regulates cell fate. The sequence is that of CLAVATA3/ESR (CLE)-related protein 4 from Arabidopsis thaliana (Mouse-ear cress).